The primary structure comprises 347 residues: Phosphate acyltransferase (347 aa).

This sequence belongs to the PlsX family. Homodimer. Probably interacts with PlsY.

The protein localises to the cytoplasm. The enzyme catalyses a fatty acyl-[ACP] + phosphate = an acyl phosphate + holo-[ACP]. It functions in the pathway lipid metabolism; phospholipid metabolism. Its function is as follows. Catalyzes the reversible formation of acyl-phosphate (acyl-PO(4)) from acyl-[acyl-carrier-protein] (acyl-ACP). This enzyme utilizes acyl-ACP as fatty acyl donor, but not acyl-CoA. This is Phosphate acyltransferase from Rhizobium meliloti (strain 1021) (Ensifer meliloti).